Here is a 215-residue protein sequence, read N- to C-terminus: High frequency lysogenization protein HflD homolog (215 aa).

It belongs to the HflD family.

It is found in the cytoplasm. The protein localises to the cell inner membrane. The sequence is that of High frequency lysogenization protein HflD homolog from Haemophilus ducreyi (strain 35000HP / ATCC 700724).